The sequence spans 413 residues: Serine hydroxymethyltransferase (413 aa).

Residues L117 and G121–L123 contribute to the (6S)-5,6,7,8-tetrahydrofolate site. K226 is subject to N6-(pyridoxal phosphate)lysine. Residues E239 and S349–F351 each bind (6S)-5,6,7,8-tetrahydrofolate.

It belongs to the SHMT family. As to quaternary structure, homodimer. Requires pyridoxal 5'-phosphate as cofactor.

Its subcellular location is the cytoplasm. The enzyme catalyses (6R)-5,10-methylene-5,6,7,8-tetrahydrofolate + glycine + H2O = (6S)-5,6,7,8-tetrahydrofolate + L-serine. The protein operates within one-carbon metabolism; tetrahydrofolate interconversion. It functions in the pathway amino-acid biosynthesis; glycine biosynthesis; glycine from L-serine: step 1/1. Its function is as follows. Catalyzes the reversible interconversion of serine and glycine with tetrahydrofolate (THF) serving as the one-carbon carrier. This reaction serves as the major source of one-carbon groups required for the biosynthesis of purines, thymidylate, methionine, and other important biomolecules. Also exhibits THF-independent aldolase activity toward beta-hydroxyamino acids, producing glycine and aldehydes, via a retro-aldol mechanism. The protein is Serine hydroxymethyltransferase of Bacillus cereus (strain AH187).